We begin with the raw amino-acid sequence, 98 residues long: Small ribosomal subunit protein bS6 (98 aa).

The protein belongs to the bacterial ribosomal protein bS6 family.

Functionally, binds together with bS18 to 16S ribosomal RNA. This is Small ribosomal subunit protein bS6 from Limosilactobacillus reuteri (strain DSM 20016) (Lactobacillus reuteri).